The primary structure comprises 360 residues: Homoserine O-acetyltransferase (360 aa).

Residues 41 to 344 (NAILICHALT…DYGHDAFLVD (304 aa)) enclose the AB hydrolase-1 domain. Ser144 (nucleophile) is an active-site residue. Arg213 is a substrate binding site. Residues Asp305 and His338 contribute to the active site. Asp339 serves as a coordination point for substrate.

It belongs to the AB hydrolase superfamily. MetX family. Homodimer.

Its subcellular location is the cytoplasm. The enzyme catalyses L-homoserine + acetyl-CoA = O-acetyl-L-homoserine + CoA. It functions in the pathway amino-acid biosynthesis; L-methionine biosynthesis via de novo pathway; O-acetyl-L-homoserine from L-homoserine: step 1/1. Functionally, transfers an acetyl group from acetyl-CoA to L-homoserine, forming acetyl-L-homoserine. The polypeptide is Homoserine O-acetyltransferase (Pasteurella multocida (strain Pm70)).